Here is an 86-residue protein sequence, read N- to C-terminus: Mu-theraphotoxin-Hhn1d (86 aa).

An N-terminal signal peptide occupies residues 1–21 (MKASMFLALAGLALLFVVCYA). Residues 22 to 49 (SESEEKEFSNELLSSVLAVDDNSKGEER) constitute a propeptide that is removed on maturation. Disulfide bonds link C51-C66, C58-C73, and C65-C80. At I84 the chain carries Isoleucine amide.

This sequence belongs to the neurotoxin 10 (Hwtx-1) family. 22 (Htx-4) subfamily. Monomer. Expressed by the venom gland.

It is found in the secreted. In terms of biological role, neurotoxin. Selectively blocks neuronal tetrodotoxin-sensitive voltage-gated sodium channels (Nav). Does not affect tetrodotoxin-resistant voltage-gated sodium channels or calcium channels. The sequence is that of Mu-theraphotoxin-Hhn1d from Cyriopagopus hainanus (Chinese bird spider).